The following is a 579-amino-acid chain: MSGTLMRMAGPTVVAEGLSGASLNEVVRVGEERLLGEIIRIEGDRATIQVYEETAGLALGEPVEASGEPLAVELGPGLLGSVFDGVQRPLSELAAREGDFLGRGASLPALDRTRAWEFEPAVAPGDRVEGGARLGVARAPGAPDHPVVVPPGVTGRVAEVRGGARRVDEPAVLLEGGATLALLERWPVRRPRPARRRLPPDVPFLTGQRVLDCFFPVSAGGTAVVPGGFGTGKTVLEQSLAKWAAADVVVYVGCGERGNEMSEVLDEFPRLEDPRTGGPLLARTVMIVNTSNMPVAAREASIYTGCAIAEYFRDMGRSVALMIDSTSRWAEALREISARLEEMPGEEGYPTYLASRLARFYERAGRVETLGGAEGAVTMVGAVSPPGGDLSEPVTQCSLRATGALWALSADLAHRRHYPAVDWSVSFTLEGDRLAGWFEREAGDGFGALRDEARKLLQRERELAEVAELVGTESLQDAERLVLESARLLREGFLRQSALDPADATCPPAKAFEMLRLFLEWHRRAGAAVGAGVPLRSILDTGLGARLLRLAQLPAAEVPGAAAALRADLSEALARLEAE.

An ATP-binding site is contributed by 227-234; sequence GGFGTGKT.

It belongs to the ATPase alpha/beta chains family.

It catalyses the reaction ATP + H2O + 4 H(+)(in) = ADP + phosphate + 5 H(+)(out). Its function is as follows. Produces ATP from ADP in the presence of a proton gradient across the membrane. The V-type alpha chain is a catalytic subunit. This chain is V-type ATP synthase alpha chain, found in Anaeromyxobacter dehalogenans (strain 2CP-1 / ATCC BAA-258).